A 251-amino-acid chain; its full sequence is 5-oxoprolinase subunit A 2 (251 aa).

This sequence belongs to the LamB/PxpA family. In terms of assembly, forms a complex composed of PxpA, PxpB and PxpC.

It carries out the reaction 5-oxo-L-proline + ATP + 2 H2O = L-glutamate + ADP + phosphate + H(+). Functionally, catalyzes the cleavage of 5-oxoproline to form L-glutamate coupled to the hydrolysis of ATP to ADP and inorganic phosphate. The sequence is that of 5-oxoprolinase subunit A 2 from Pseudomonas syringae pv. tomato (strain ATCC BAA-871 / DC3000).